A 212-amino-acid polypeptide reads, in one-letter code: Large ribosomal subunit protein uL3 (212 aa).

Residues 130-155 (KRGNMTHGSKNHRLPGSTGAGTTPGR) are disordered.

This sequence belongs to the universal ribosomal protein uL3 family. In terms of assembly, part of the 50S ribosomal subunit. Forms a cluster with proteins L14 and L19.

Functionally, one of the primary rRNA binding proteins, it binds directly near the 3'-end of the 23S rRNA, where it nucleates assembly of the 50S subunit. The chain is Large ribosomal subunit protein uL3 from Rippkaea orientalis (strain PCC 8801 / RF-1) (Cyanothece sp. (strain PCC 8801)).